Here is a 61-residue protein sequence, read N- to C-terminus: MIYITIFMILPCPVPCSHVFLYVFYIFLFLVLFIMTIYQSSQKLHFSNCYHNNQHHNSLHN.

A helical transmembrane segment spans residues 18-38 (HVFLYVFYIFLFLVLFIMTIY).

Its subcellular location is the cell inner membrane. In Escherichia coli (strain K12), this protein is Protein YncO.